Consider the following 398-residue polypeptide: Lipoyl synthase, mitochondrial (398 aa).

The N-terminal 32 residues, 1–32 (MIALRVHNTRVVSRSLTVWTRPSPTLTLSRSL), are a transit peptide targeting the mitochondrion. [4Fe-4S] cluster-binding residues include Cys-117, Cys-122, Cys-128, Cys-147, Cys-151, Cys-154, and Ser-362. Residues 132 to 351 (KKSEATATIM…RDTALEMGFL (220 aa)) enclose the Radical SAM core domain.

This sequence belongs to the radical SAM superfamily. Lipoyl synthase family. It depends on [4Fe-4S] cluster as a cofactor.

The protein resides in the mitochondrion. The enzyme catalyses [[Fe-S] cluster scaffold protein carrying a second [4Fe-4S](2+) cluster] + N(6)-octanoyl-L-lysyl-[protein] + 2 oxidized [2Fe-2S]-[ferredoxin] + 2 S-adenosyl-L-methionine + 4 H(+) = [[Fe-S] cluster scaffold protein] + N(6)-[(R)-dihydrolipoyl]-L-lysyl-[protein] + 4 Fe(3+) + 2 hydrogen sulfide + 2 5'-deoxyadenosine + 2 L-methionine + 2 reduced [2Fe-2S]-[ferredoxin]. The protein operates within protein modification; protein lipoylation via endogenous pathway; protein N(6)-(lipoyl)lysine from octanoyl-[acyl-carrier-protein]: step 2/2. In terms of biological role, catalyzes the radical-mediated insertion of two sulfur atoms into the C-6 and C-8 positions of the octanoyl moiety bound to the lipoyl domains of lipoate-dependent enzymes, thereby converting the octanoylated domains into lipoylated derivatives. The protein is Lipoyl synthase, mitochondrial of Scheffersomyces stipitis (strain ATCC 58785 / CBS 6054 / NBRC 10063 / NRRL Y-11545) (Yeast).